The chain runs to 366 residues: L-Ala-D/L-Glu epimerase (366 aa).

Substrate is bound by residues arginine 24, threonine 135, and lysine 160. The Proton acceptor; specific for (R)-substrate epimerization role is filled by lysine 162. Mg(2+) contacts are provided by aspartate 191, glutamate 219, and aspartate 244. Lysine 268 acts as the Proton acceptor; specific for (S)-substrate epimerization in catalysis. Positions 296, 298, 321, and 323 each coordinate substrate.

This sequence belongs to the mandelate racemase/muconate lactonizing enzyme family. As to quaternary structure, homooctamer; tetramer of dimers. The cofactor is Mg(2+).

The catalysed reaction is L-alanyl-L-glutamate = L-alanyl-D-glutamate. It functions in the pathway cell wall degradation; peptidoglycan degradation. In terms of biological role, catalyzes the epimerization of L-Ala-D-Glu to L-Ala-L-Glu and has probably a role in the metabolism of the murein peptide, of which L-Ala-D-Glu is a component. Is also able to catalyze the reverse reaction and the epimerization of the other Ala-X dipeptides L-Ala-L-Asp, L-Ala-L-Leu, L-Ala-L-Met, and L-Ala-L-Ser. Is not able to epimerize other L-Ala-X dipeptides. Is also active with L-Ser-L-Glu and, oddly, L-Pro-L-Glu, but not with L-Glu-L-Glu, L-Lys-L-Glu, L-Lys-L-Ala, or D-Ala-D-Ala. The protein is L-Ala-D/L-Glu epimerase (ykfB) of Bacillus subtilis (strain 168).